Here is a 692-residue protein sequence, read N- to C-terminus: Follicle-stimulating hormone receptor (692 aa).

The signal sequence occupies residues M1–G17. 2 disulfides stabilise this stretch: C18–C25 and C23–C32. Residues C18–R46 enclose the LRRNT domain. Residues C18–R365 lie on the Extracellular side of the membrane. LRR repeat units follow at residues I49–L72, E73–L97, H98–N118, L119–S143, L144–S169, F170–G192, T193–G216, A217–N240, and L241–D259. 2 N-linked (GlcNAc...) asparagine glycosylation sites follow: N191 and N199. Cystine bridges form between C275/C345, C276/C292, C276/C355, and C292/C337. N-linked (GlcNAc...) asparagine glycosylation is present at N293. Y334 is subject to Sulfotyrosine. A helical membrane pass occupies residues V366–L386. Residues T387 to R397 are Cytoplasmic-facing. The helical transmembrane segment at F398–V420 threads the bilayer. At D421–D442 the chain is on the extracellular side. C441 and C516 are oxidised to a cystine. The chain crosses the membrane as a helical span at residues A443–L464. The Cytoplasmic portion of the chain corresponds to E465–H484. A helical membrane pass occupies residues A485 to I507. Topologically, residues S508–Q527 are extracellular. Residues L528–T549 traverse the membrane as a helical segment. At H550–R572 the chain is on the cytoplasmic side. Residues M573–L596 form a helical membrane-spanning segment. Topologically, residues K597–K607 are extracellular. Residues I608 to T629 form a helical membrane-spanning segment. At K630–N692 the chain is on the cytoplasmic side.

It belongs to the G-protein coupled receptor 1 family. FSH/LSH/TSH subfamily. As to quaternary structure, homotrimer. Functions as a homotrimer binding the FSH hormone heterodimer composed of CGA and FSHB. Interacts with ARRB2. Interacts with APPL2; interaction is independent of follicle stimulating hormone stimulation. Post-translationally, N-glycosylated; indirectly required for FSH-binding, possibly via a conformational change that allows high affinity binding of hormone. In terms of processing, sulfated.

It is found in the cell membrane. Its function is as follows. G protein-coupled receptor for follitropin, the follicle-stimulating hormone. Through cAMP production activates the downstream PI3K-AKT and ERK1/ERK2 signaling pathways. The chain is Follicle-stimulating hormone receptor (Fshr) from Mus musculus (Mouse).